Reading from the N-terminus, the 142-residue chain is Organic hydroperoxide resistance protein-like 2 (142 aa).

Belongs to the OsmC/Ohr family.

This is Organic hydroperoxide resistance protein-like 2 from Staphylococcus epidermidis (strain ATCC 12228 / FDA PCI 1200).